Consider the following 218-residue polypeptide: MSCSSALEKFINSYLNSYQNALSELPRYYPMGVASPCIAQTFDEQSEDAVFWQPVKREPAGDFDNVASALAITLHQDINHFYASFFSAPLQFNSPWGEGELLLAWSLEDFEYLQQNIIGHLLMKQKLKQAPTWFIGVLSDGDTMITVENDTGAVWIEVPGEVPKQQLAPSIAEFITQLSPRITPAIKPVQEVDPQWQHPGIWQRMKLMWRDLTHRSRK.

This sequence belongs to the Syd family.

The protein localises to the cell inner membrane. In terms of biological role, interacts with the SecY protein in vivo. May bind preferentially to an uncomplexed state of SecY, thus functioning either as a chelating agent for excess SecY in the cell or as a regulatory factor that negatively controls the translocase function. In Shewanella denitrificans (strain OS217 / ATCC BAA-1090 / DSM 15013), this protein is Protein Syd.